The sequence spans 574 residues: Sodium/hydrogen exchanger 8 (574 aa).

Helical transmembrane passes span 53–73 (MTIF…HLLI), 77–97 (LHFL…GAFI), 116–136 (PNMF…YSLH), 149–169 (LFSV…IYFL), 184–204 (FAFG…IFNA), 254–274 (LGYF…TGLI), 304–324 (GLAE…GIVM), 347–367 (VAFM…FSFP), 373–393 (SFVI…IFPL), 410–430 (MFIM…SLHL), and 444–464 (TTII…MPLI).

The protein belongs to the monovalent cation:proton antiporter 1 (CPA1) transporter (TC 2.A.36) family.

It is found in the golgi apparatus membrane. In terms of biological role, involved in pH regulation to eliminate acids generated by active metabolism or to counter adverse environmental conditions. Major proton extruding system driven by the inward sodium ion chemical gradient. Plays an important role in signal transduction. This is Sodium/hydrogen exchanger 8 from Gallus gallus (Chicken).